A 202-amino-acid chain; its full sequence is Glycerol-3-phosphate acyltransferase (202 aa).

The next 5 helical transmembrane spans lie at Asn3–Ala23, Leu87–Phe107, Gly118–Ile138, Ile144–Asn164, and Leu167–Leu187.

The protein belongs to the PlsY family. Probably interacts with PlsX.

The protein localises to the cell inner membrane. It carries out the reaction an acyl phosphate + sn-glycerol 3-phosphate = a 1-acyl-sn-glycero-3-phosphate + phosphate. The protein operates within lipid metabolism; phospholipid metabolism. Catalyzes the transfer of an acyl group from acyl-phosphate (acyl-PO(4)) to glycerol-3-phosphate (G3P) to form lysophosphatidic acid (LPA). This enzyme utilizes acyl-phosphate as fatty acyl donor, but not acyl-CoA or acyl-ACP. The sequence is that of Glycerol-3-phosphate acyltransferase from Campylobacter jejuni (strain RM1221).